The sequence spans 362 residues: Carbamoyl phosphate synthase small chain (362 aa).

Residues 1–169 (MGKRLLILED…TKTAYPAPGV (169 aa)) form a CPSase region. Residues Ser-46, Gly-220, and Gly-222 each coordinate L-glutamine. A Glutamine amidotransferase type-1 domain is found at 172–358 (NIVLVDFGLK…LELIDAFQLE (187 aa)). Catalysis depends on Cys-247, which acts as the Nucleophile. Met-248, Gln-251, Asn-289, Gly-291, and Tyr-292 together coordinate L-glutamine. Active-site residues include His-331 and Asp-333.

Belongs to the CarA family. Composed of two chains; the small (or glutamine) chain promotes the hydrolysis of glutamine to ammonia, which is used by the large (or ammonia) chain to synthesize carbamoyl phosphate. Tetramer of heterodimers (alpha,beta)4.

The catalysed reaction is hydrogencarbonate + L-glutamine + 2 ATP + H2O = carbamoyl phosphate + L-glutamate + 2 ADP + phosphate + 2 H(+). It catalyses the reaction L-glutamine + H2O = L-glutamate + NH4(+). It functions in the pathway amino-acid biosynthesis; L-arginine biosynthesis; carbamoyl phosphate from bicarbonate: step 1/1. It participates in pyrimidine metabolism; UMP biosynthesis via de novo pathway; (S)-dihydroorotate from bicarbonate: step 1/3. In terms of biological role, small subunit of the glutamine-dependent carbamoyl phosphate synthetase (CPSase). CPSase catalyzes the formation of carbamoyl phosphate from the ammonia moiety of glutamine, carbonate, and phosphate donated by ATP, constituting the first step of 2 biosynthetic pathways, one leading to arginine and/or urea and the other to pyrimidine nucleotides. The small subunit (glutamine amidotransferase) binds and cleaves glutamine to supply the large subunit with the substrate ammonia. The sequence is that of Carbamoyl phosphate synthase small chain from Streptococcus mutans serotype c (strain ATCC 700610 / UA159).